Consider the following 425-residue polypeptide: Serine--tRNA ligase (425 aa).

230-232 contributes to the L-serine binding site; the sequence is TAE. 261–263 is an ATP binding site; that stretch reads RSE. E284 is a binding site for L-serine. ATP is bound at residue 348 to 351; sequence EISS. An L-serine-binding site is contributed by S384.

This sequence belongs to the class-II aminoacyl-tRNA synthetase family. Type-1 seryl-tRNA synthetase subfamily. As to quaternary structure, homodimer. The tRNA molecule binds across the dimer.

The protein resides in the cytoplasm. The enzyme catalyses tRNA(Ser) + L-serine + ATP = L-seryl-tRNA(Ser) + AMP + diphosphate + H(+). It carries out the reaction tRNA(Sec) + L-serine + ATP = L-seryl-tRNA(Sec) + AMP + diphosphate + H(+). Its pathway is aminoacyl-tRNA biosynthesis; selenocysteinyl-tRNA(Sec) biosynthesis; L-seryl-tRNA(Sec) from L-serine and tRNA(Sec): step 1/1. Its function is as follows. Catalyzes the attachment of serine to tRNA(Ser). Is also able to aminoacylate tRNA(Sec) with serine, to form the misacylated tRNA L-seryl-tRNA(Sec), which will be further converted into selenocysteinyl-tRNA(Sec). This chain is Serine--tRNA ligase, found in Streptococcus equi subsp. equi (strain 4047).